The following is a 551-amino-acid chain: Steroid transmembrane transporter SLC22A24 (551 aa).

A run of 12 helical transmembrane segments spans residues 16 to 36 (FQIL…PHTV), 146 to 166 (SVAK…GGHL), 174 to 194 (FIVT…AFAP), 204 to 222 (FLTG…LLIL), 235 to 255 (ALIF…AFGI), 260 to 280 (HLQL…RWLS), 350 to 370 (ICLL…LLIN), 378 to 398 (VFLL…LGNF), 410 to 430 (IIFM…TQEM), 435 to 455 (LVLA…TAVL), 469 to 489 (LGVI…LMIL), and 496 to 516 (LPWI…LLLP). The segment at 524–551 (PDSIQDVENKRKSSREVKKDAVAKVTPF) is disordered. Over residues 530 to 545 (VENKRKSSREVKKDAV) the composition is skewed to basic and acidic residues.

In terms of tissue distribution, localized to the kidney. Mainly expressed in the late segments of proximal tubules.

The protein localises to the cell membrane. It carries out the reaction estrone 3-sulfate(out) + glutarate(in) = estrone 3-sulfate(in) + glutarate(out). The enzyme catalyses 17beta-estradiol 17-O-(beta-D-glucuronate)(out) + glutarate(in) = 17beta-estradiol 17-O-(beta-D-glucuronate)(in) + glutarate(out). The catalysed reaction is dehydroepiandrosterone 3-sulfate(out) + glutarate(in) = dehydroepiandrosterone 3-sulfate(in) + glutarate(out). In terms of biological role, renal transmembrane organic anion/dicarboxylate exchanger that participates in the reabsorption of conjugated steroids, as well as bile acids, driven by an outward gradient of dicarboxylates such as glutarate or succinate. Transports estrone 3-sulfate and estradiol-17-glucuronide (17beta-estradiol 17-O-(beta-D-glucuronate)), but not androstanediol glucuronide (5alpha-androstane-3alpha,17beta-diol 3-O-(beta-D-glucuronate)), nor taurocholate. Prefers sulfate conjugates of steroids rather than glucuronide conjugates. The polypeptide is Steroid transmembrane transporter SLC22A24 (Rattus norvegicus (Rat)).